We begin with the raw amino-acid sequence, 89 residues long: Nitrogen regulatory protein (89 aa).

One can recognise a PTS EIIA type-2 domain in the interval 6 to 89; the sequence is TILTPGRSLV…ALLHLEAPID (84 aa). His68 serves as the catalytic Tele-phosphohistidine intermediate.

It localises to the cytoplasm. Its function is as follows. Seems to have a role in regulating nitrogen assimilation. The chain is Nitrogen regulatory protein (ptsN) from Pseudomonas putida (Arthrobacter siderocapsulatus).